The primary structure comprises 535 residues: D-2-hydroxyglutarate dehydrogenase, mitochondrial (535 aa).

The transit peptide at 1 to 50 (MVLHLVPRWSASLFRASPRWKKTYSQRASAQLKWLGCPRSVYSPLACRAY) directs the protein to the mitochondrion. Residues 110–289 (VRGCSKVLLR…TAVSIVCPPR (180 aa)) enclose the FAD-binding PCMH-type domain. An N6-succinyllysine modification is found at K115. (R)-2-hydroxyglutarate is bound by residues R400, T404, and K415. Position 400 (R400) interacts with (R)-lactate. (R)-malate is bound by residues R400, T404, and K415. Zn(2+)-binding residues include H448 and H455. N457 contacts (R)-2-hydroxyglutarate. Position 489 (E489) interacts with Zn(2+). Residue H490 coordinates (R)-2-hydroxyglutarate. H490 is a (R)-lactate binding site. H490 serves as a coordination point for (R)-malate.

This sequence belongs to the FAD-binding oxidoreductase/transferase type 4 family. It depends on FAD as a cofactor.

The protein resides in the mitochondrion. It catalyses the reaction (R)-2-hydroxyglutarate + A = 2-oxoglutarate + AH2. The catalysed reaction is (R)-malate + A = oxaloacetate + AH2. With respect to regulation, activated by zinc, cobalt and manganese ions. Inhibited by EDTA. In terms of biological role, catalyzes the oxidation of D-2-hydroxyglutarate (D-2-HG) to alpha-ketoglutarate. Also catalyzes the oxidation of other D-2-hydroxyacids, such as D-malate (D-MAL) and D-lactate (D-LAC). Exhibits high activities towards D-2-HG and D-MAL but a very weak activity towards D-LAC. This is D-2-hydroxyglutarate dehydrogenase, mitochondrial from Rattus norvegicus (Rat).